The chain runs to 234 residues: ATP synthase subunit a 1 (234 aa).

Transmembrane regions (helical) follow at residues 29–49 (FLVH…VALL), 90–110 (LIAT…IPGF), 116–136 (NLNT…VVGV), 147–167 (FVGP…IGHL), 186–206 (IVLV…MMLM), and 207–227 (GILV…IYIA).

Belongs to the ATPase A chain family. As to quaternary structure, F-type ATPases have 2 components, CF(1) - the catalytic core - and CF(0) - the membrane proton channel. CF(1) has five subunits: alpha(3), beta(3), gamma(1), delta(1), epsilon(1). CF(0) has three main subunits: a(1), b(2) and c(9-12). The alpha and beta chains form an alternating ring which encloses part of the gamma chain. CF(1) is attached to CF(0) by a central stalk formed by the gamma and epsilon chains, while a peripheral stalk is formed by the delta and b chains.

It localises to the cell inner membrane. Its function is as follows. Key component of the proton channel; it plays a direct role in the translocation of protons across the membrane. The protein is ATP synthase subunit a 1 of Syntrophotalea carbinolica (strain DSM 2380 / NBRC 103641 / GraBd1) (Pelobacter carbinolicus).